A 291-amino-acid chain; its full sequence is Taste receptor type 2 member 16 (291 aa).

A topological domain (extracellular) is located at residue Met-1. A helical transmembrane segment spans residues 2–22; the sequence is IPIQLTVFFMIIYVLESLTII. The Cytoplasmic portion of the chain corresponds to 23–41; sequence VQSSLIVAVLGREWLQVRR. Residues 42-62 traverse the membrane as a helical segment; that stretch reads LMPVDMILISLGISRFCLQWA. The Extracellular segment spans residues 63–84; it reads SMLNNFCSYFNLNYVLCNLTIT. N-linked (GlcNAc...) asparagine glycosylation occurs at Asn-80. Residues 85-105 form a helical membrane-spanning segment; that stretch reads WEFFNILTFWLNSLLTVFYCI. Topologically, residues 106–125 are cytoplasmic; the sequence is KVSSFTHHIFLWLRWRILRL. Residues 126–146 traverse the membrane as a helical segment; that stretch reads FPWILLGSLMITCVTIIPSAI. Residues 147-182 are Extracellular-facing; it reads GNYIQIQLLTMEHLPRNSTVTDKLEKFHQYQFQAHT. Residue Asn-163 is glycosylated (N-linked (GlcNAc...) asparagine). Residues 183–203 form a helical membrane-spanning segment; that stretch reads VALVIPFILFLASTILLMASL. Residues 204–228 are Cytoplasmic-facing; sequence TKQIQHHSTGHCNPSMKAHFTALRS. The chain crosses the membrane as a helical span at residues 229–249; that stretch reads LAVLFIVFTSYFLTILITIIG. Topologically, residues 250–257 are extracellular; it reads TLFDKRCW. A helical transmembrane segment spans residues 258–278; sequence LWVWEAFVYAFILMHSTSLML. The Cytoplasmic segment spans residues 279–291; the sequence is SSPTLKRILKGKC.

It belongs to the G-protein coupled receptor T2R family. As to quaternary structure, interacts with RTP3 and RTP4.

It localises to the cell membrane. Functionally, receptor that may play a role in the perception of bitterness and is gustducin-linked. May play a role in sensing the chemical composition of the gastrointestinal content. The activity of this receptor may stimulate alpha gustducin, mediate PLC-beta-2 activation and lead to the gating of TRPM5. In Pan troglodytes (Chimpanzee), this protein is Taste receptor type 2 member 16 (TAS2R16).